The sequence spans 238 residues: Ribosomal RNA small subunit methyltransferase G (238 aa).

Residues G78, F83, 129–130 (AE), and R148 contribute to the S-adenosyl-L-methionine site. Residues 217–238 (KKKETPKKYPRKAGTPAKSPIK) form a disordered region.

Belongs to the methyltransferase superfamily. RNA methyltransferase RsmG family.

Its subcellular location is the cytoplasm. In terms of biological role, specifically methylates the N7 position of a guanine in 16S rRNA. The polypeptide is Ribosomal RNA small subunit methyltransferase G (Lactococcus lactis subsp. cremoris (strain MG1363)).